The sequence spans 551 residues: Putative BTB/POZ domain-containing protein L76 (551 aa).

The BTB domain occupies 19–90 (TDIILEIEDD…FYGQENDVID (72 aa)).

This sequence belongs to the mimivirus BTB/WD family.

This chain is Putative BTB/POZ domain-containing protein L76, found in Acanthamoeba polyphaga (Amoeba).